Reading from the N-terminus, the 836-residue chain is Transcription factor vrtR2 (836 aa).

The segment covering 1 to 26 (MPSLSSKTSTMQRSCRPQMSACPNQQ) has biased composition (polar residues). A disordered region spans residues 1 to 29 (MPSLSSKTSTMQRSCRPQMSACPNQQQKD). Residues 37–63 (CVLCRDRKLKCDKLDPCSNCTSSGVAC) constitute a DNA-binding region (zn(2)-C6 fungal-type). A disordered region spans residues 72 to 114 (PRGRHARTVQTKASTPPDTRRRGSSNESTTAPAPDDGGLGTHI). The segment covering 79-88 (TVQTKASTPP) has biased composition (polar residues).

Its subcellular location is the nucleus. Functionally, probable transcription factor that regulates expression of the gene cluster that mediates the biosynthesis of viridicatumtoxin, a tetracycline-like fungal meroterpenoid with a unique, fused spirobicyclic ring system. This is Transcription factor vrtR2 from Penicillium aethiopicum.